The following is a 227-amino-acid chain: Uracil-DNA glycosylase (227 aa).

Asp-65 functions as the Proton acceptor in the catalytic mechanism.

It belongs to the uracil-DNA glycosylase (UDG) superfamily. UNG family.

The protein localises to the cytoplasm. The enzyme catalyses Hydrolyzes single-stranded DNA or mismatched double-stranded DNA and polynucleotides, releasing free uracil.. Functionally, excises uracil residues from the DNA which can arise as a result of misincorporation of dUMP residues by DNA polymerase or due to deamination of cytosine. The chain is Uracil-DNA glycosylase from Buchnera aphidicola subsp. Cinara cedri (strain Cc).